The chain runs to 201 residues: UPF0301 protein Avi_1069 (201 aa).

Belongs to the UPF0301 (AlgH) family.

The sequence is that of UPF0301 protein Avi_1069 from Allorhizobium ampelinum (strain ATCC BAA-846 / DSM 112012 / S4) (Agrobacterium vitis (strain S4)).